Here is a 156-residue protein sequence, read N- to C-terminus: Transcription elongation factor GreA (156 aa).

A coiled-coil region spans residues 8–75 (LTKEGYEKLK…ELENMLSKAE (68 aa)).

This sequence belongs to the GreA/GreB family.

Its function is as follows. Necessary for efficient RNA polymerase transcription elongation past template-encoded arresting sites. The arresting sites in DNA have the property of trapping a certain fraction of elongating RNA polymerases that pass through, resulting in locked ternary complexes. Cleavage of the nascent transcript by cleavage factors such as GreA or GreB allows the resumption of elongation from the new 3'terminus. GreA releases sequences of 2 to 3 nucleotides. This is Transcription elongation factor GreA from Thermosipho melanesiensis (strain DSM 12029 / CIP 104789 / BI429).